A 295-amino-acid chain; its full sequence is ESX-3 secretion-associated protein EspG3 (295 aa).

It belongs to the EspG family. In terms of assembly, interacts specifically with ESX-3-dependent PE/PPE proteins.

The protein resides in the cytoplasm. Functionally, specific chaperone for cognate PE/PPE proteins. Plays an important role in preventing aggregation of PE/PPE dimers. This Mycobacterium tuberculosis (strain CDC 1551 / Oshkosh) protein is ESX-3 secretion-associated protein EspG3.